The following is a 414-amino-acid chain: uncharacterized protein (414 aa).

A signal peptide spans 1-16 (MRVILLLAFLISLTEC). The 40-residue stretch at 20–59 (SEDLALYDLVEEVGVNFYEWFDIPRDASSNQVKKAYRKLT) folds into the Myb-like 1 domain. One can recognise a J domain in the interval 35–99 (NFYEWFDIPR…ELREKYDNVL (65 aa)). A helical membrane pass occupies residues 125-145 (ILVLLFIGTIAHYLMMWAAYF). Residues 211 to 234 (MTPKEVEPEEPTEEELAQQRRQQR) are disordered. Residues 217-226 (EPEEPTEEEL) show a composition bias toward acidic residues. One can recognise a Myb-like 2 domain in the interval 274-320 (AQKQSGATWTPDELASLVRLSTEKYPAGTPNRWEQMGRVLNRSAEDV). An SANT domain is found at 352–407 (KSEDDWSQAEQKAFETALQKYPKGTDERWERISEEIGSKTKKQVMVRFKQLAEMIR).

The protein localises to the nucleus membrane. This is an uncharacterized protein from Caenorhabditis elegans.